Here is a 214-residue protein sequence, read N- to C-terminus: Pyridoxine/pyridoxamine 5'-phosphate oxidase (214 aa).

Substrate-binding positions include 7–10 and Lys65; that span reads REEY. Residues 60 to 65, 75 to 76, Arg81, Lys82, and Gln104 each bind FMN; these read RTVLLK and FT. Substrate contacts are provided by Tyr122, Arg126, and Ser130. Residues 139-140 and Trp184 each bind FMN; that span reads QS. 190–192 provides a ligand contact to substrate; it reads RLH. Arg194 contributes to the FMN binding site.

It belongs to the pyridoxamine 5'-phosphate oxidase family. As to quaternary structure, homodimer. FMN is required as a cofactor.

It carries out the reaction pyridoxamine 5'-phosphate + O2 + H2O = pyridoxal 5'-phosphate + H2O2 + NH4(+). The enzyme catalyses pyridoxine 5'-phosphate + O2 = pyridoxal 5'-phosphate + H2O2. The protein operates within cofactor metabolism; pyridoxal 5'-phosphate salvage; pyridoxal 5'-phosphate from pyridoxamine 5'-phosphate: step 1/1. Its pathway is cofactor metabolism; pyridoxal 5'-phosphate salvage; pyridoxal 5'-phosphate from pyridoxine 5'-phosphate: step 1/1. In terms of biological role, catalyzes the oxidation of either pyridoxine 5'-phosphate (PNP) or pyridoxamine 5'-phosphate (PMP) into pyridoxal 5'-phosphate (PLP). The polypeptide is Pyridoxine/pyridoxamine 5'-phosphate oxidase (Crocosphaera subtropica (strain ATCC 51142 / BH68) (Cyanothece sp. (strain ATCC 51142))).